Reading from the N-terminus, the 328-residue chain is Alpha-tubulin N-acetyltransferase 2 (328 aa).

Residues 5 to 185 (SQVALLPKLS…NNFVVFHRYF (181 aa)) form the N-acetyltransferase domain. Residues 119–132 (FFVD…GFGK) and 155–164 (SVKFLAFLRK) contribute to the acetyl-CoA site. Disordered regions lie at residues 219-261 (EYQS…PGKK) and 282-328 (GGDP…TPEH). Over residues 238–248 (TPPPPLPPPLV) the composition is skewed to pro residues. The span at 312–328 (PTRSGVQYNIISGTPEH) shows a compositional bias: polar residues.

The protein belongs to the acetyltransferase ATAT1 family.

It carries out the reaction L-lysyl-[alpha-tubulin] + acetyl-CoA = N(6)-acetyl-L-lysyl-[alpha-tubulin] + CoA + H(+). Functionally, specifically acetylates 'Lys-40' in alpha-tubulin on the lumenal side of microtubules. Promotes microtubule destabilization and accelerates microtubule dynamics; this activity may be independent of acetylation activity. Acetylates alpha-tubulin with a slow enzymatic rate, due to a catalytic site that is not optimized for acetyl transfer. Enters the microtubule through each end and diffuses quickly throughout the lumen of microtubules. Acetylates only long/old microtubules because of its slow acetylation rate since it does not have time to act on dynamically unstable microtubules before the enzyme is released. The sequence is that of Alpha-tubulin N-acetyltransferase 2 from Trypanosoma cruzi (strain CL Brener).